The following is a 121-amino-acid chain: Small ribosomal subunit protein uS13 (121 aa).

Residues 91-121 (HKRGLPVRGQRTRTNARTRKGPRRAAASLKK) are disordered.

It belongs to the universal ribosomal protein uS13 family. In terms of assembly, part of the 30S ribosomal subunit. Forms a loose heterodimer with protein S19. Forms two bridges to the 50S subunit in the 70S ribosome.

Its function is as follows. Located at the top of the head of the 30S subunit, it contacts several helices of the 16S rRNA. In the 70S ribosome it contacts the 23S rRNA (bridge B1a) and protein L5 of the 50S subunit (bridge B1b), connecting the 2 subunits; these bridges are implicated in subunit movement. Contacts the tRNAs in the A and P-sites. This chain is Small ribosomal subunit protein uS13, found in Bordetella petrii (strain ATCC BAA-461 / DSM 12804 / CCUG 43448).